The primary structure comprises 89 residues: UPF0297 protein lp_2275 (89 aa).

The protein belongs to the UPF0297 family.

The protein is UPF0297 protein lp_2275 of Lactiplantibacillus plantarum (strain ATCC BAA-793 / NCIMB 8826 / WCFS1) (Lactobacillus plantarum).